The following is a 177-amino-acid chain: ATP synthase subunit delta (177 aa).

It belongs to the ATPase delta chain family. In terms of assembly, F-type ATPases have 2 components, F(1) - the catalytic core - and F(0) - the membrane proton channel. F(1) has five subunits: alpha(3), beta(3), gamma(1), delta(1), epsilon(1). F(0) has three main subunits: a(1), b(2) and c(10-14). The alpha and beta chains form an alternating ring which encloses part of the gamma chain. F(1) is attached to F(0) by a central stalk formed by the gamma and epsilon chains, while a peripheral stalk is formed by the delta and b chains.

The protein resides in the cell membrane. F(1)F(0) ATP synthase produces ATP from ADP in the presence of a proton or sodium gradient. F-type ATPases consist of two structural domains, F(1) containing the extramembraneous catalytic core and F(0) containing the membrane proton channel, linked together by a central stalk and a peripheral stalk. During catalysis, ATP synthesis in the catalytic domain of F(1) is coupled via a rotary mechanism of the central stalk subunits to proton translocation. Functionally, this protein is part of the stalk that links CF(0) to CF(1). It either transmits conformational changes from CF(0) to CF(1) or is implicated in proton conduction. This chain is ATP synthase subunit delta, found in Buchnera aphidicola subsp. Acyrthosiphon pisum (strain 5A).